The chain runs to 617 residues: DNA-(apurinic or apyrimidinic site) endonuclease (617 aa).

The segment at 74-99 (IKNSDEQNNSNNNNNNSSSSNFCSNN) is disordered. Low complexity predominate over residues 81 to 99 (NNSNNNNNNSSSSNFCSNN). Residues Asn-284 and Glu-317 each contribute to the Mg(2+) site. A disordered region spans residues 326-349 (SEPCDNKNKNKNKNDGIRDRGKIK). Residues 329–349 (CDNKNKNKNKNDGIRDRGKIK) are compositionally biased toward basic and acidic residues. Asp-474, Asn-476, Asp-606, and His-607 together coordinate Mg(2+). The active-site Proton acceptor is the His-607.

The protein belongs to the DNA repair enzymes AP/ExoA family. The cofactor is Mg(2+). Mn(2+) is required as a cofactor. Post-translationally, may be proteolytically cleaved into a 64 kDa form.

The protein localises to the mitochondrion. The enzyme catalyses Exonucleolytic cleavage in the 3'- to 5'-direction to yield nucleoside 5'-phosphates.. Apurinic/apyrimidinic (AP) endonuclease activity is maximal at low Mg(2+) (0.5-2 mM) with no activity seen at high concentrations (more than 10 mM). 3'-5' exonuclease activity is maximal in the range of 0.5-2 mM Mg(2+) with activity seen up to 10 mM Mg(2+). In terms of biological role, multifunctional protein that plays a central role in mitochondrial DNA base excision repair (BER) pathway induced by oxidative stress. Has apurinic/apyrimidinic (AP) endonuclease activity towards double-stranded DNA (dsDNA). Has nucleotide incision repair (NIR) activity; acts on dsDNA with oxidized bases thymine glycol and 5,6-dihydro-2'-deoxyuridine. Has 3'-5' exonuclease; can use dsDNA templates with 3'-OH termini including blunt-end, gapped and mismatched 3'-recessed. Has 3'-phosphatase activity; cleaves 3'-phosphate from blunt, recessed and gapped dsDNA templates, followed by 3'-5' exonuclease activity. Has RNase H-like activity; cleaves RNA on 3'-recessed RNA-DNA duplex. Plays a role in merosome infection of host erythrocytes. The polypeptide is DNA-(apurinic or apyrimidinic site) endonuclease (Plasmodium falciparum (isolate 3D7)).